The sequence spans 82 residues: Putative Fe(2+) transport protein A (82 aa).

It belongs to the FeoA family.

In terms of biological role, might be involved in Fe(2+) ion uptake. The sequence is that of Putative Fe(2+) transport protein A from Methanocaldococcus jannaschii (strain ATCC 43067 / DSM 2661 / JAL-1 / JCM 10045 / NBRC 100440) (Methanococcus jannaschii).